Here is a 434-residue protein sequence, read N- to C-terminus: Asparagine--tRNA ligase (434 aa).

Belongs to the class-II aminoacyl-tRNA synthetase family.

It localises to the cytoplasm. The enzyme catalyses tRNA(Asn) + L-asparagine + ATP = L-asparaginyl-tRNA(Asn) + AMP + diphosphate + H(+). This Pyrococcus abyssi (strain GE5 / Orsay) protein is Asparagine--tRNA ligase.